The primary structure comprises 292 residues: uncharacterized protein (292 aa).

The helical transmembrane segment at 17–37 (SMDMFFFLFIFLLFIYPEMMM) threads the bilayer.

This sequence to M.jannaschii MJ0137.

It is found in the membrane. This is an uncharacterized protein from Methanocaldococcus jannaschii (strain ATCC 43067 / DSM 2661 / JAL-1 / JCM 10045 / NBRC 100440) (Methanococcus jannaschii).